Here is a 716-residue protein sequence, read N- to C-terminus: MAPSIKLSTMATSLHRAHGTSALLRRPRLWAPRLSSIHATPTIANLRASFTTSSPRLFAPNGSAKDESKPAVSTVPKTTGRGPSDPLAAIDKTAQEQRKADWAIMKEMSKYLWPKGSWGDKARVLLAIGLLVGGKVLNVQVPFYFREIVDSLNIDFSTTGGSVTAVAGAMILGYGAARVGAVVSQELRNAVFASVAQKAIRKVARNTFEHLLNLDLSFHLSKQTGGLTRAIDRGTKGISFLLTSMVFHIVPTALEISMVCGILTYNFGWQYAALTALTMVSYTAFTILTTAWRTKFRRQANAADNKASTIAVDSLINYEAVKYFNNEAYEVGRYDKALAQYEKNSIKVATSLAFLNSGQNIIFSSALTVMMYMGAHGVATGQLTVGDLVLINQLVFQLSVPLNFLGSVYRELRQSLLDMETLFNLQKVNVTIKEQPNAKPLTLTRGGEIEFKDVTFGYHPESPILRDLSLTIPAGKKVAIVGPSGCGKSTLLRLLFRFYDPQKGAIYIDGQDIRSVTLESLRRAIGVVPQDTPLFNDTVEHNIRYGNLSATPEQVIEAAKAAHIHEKIISWRDGYNTKVGERGLMISGGEKQRLAVSRLILKDPPLLFFDEATSALDTHTEQALMENINAILKGLGQKGEKKTSLFVAHRLRTIYDSDLIIVLKEGRVAEQGTHRELMERNGVYAQLWRAQEMLMTEEGEVSKKGEKEEVGEKKEA.

A mitochondrion-targeting transit peptide spans M1–H18. Topologically, residues G19–R123 are mitochondrial matrix. Residues L57–L87 are disordered. Residues V124 to F145 traverse the membrane as a helical segment. The ABC transmembrane type-1 domain occupies V124–Q414. The Mitochondrial intermembrane portion of the chain corresponds to R146–G168. The chain crosses the membrane as a helical span at residues A169–F192. Topologically, residues A193–L241 are mitochondrial matrix. Residues L242–Y265 traverse the membrane as a helical segment. A topological domain (mitochondrial intermembrane) is located at residue N266. A helical membrane pass occupies residues F267–I287. At L288 to A353 the chain is on the mitochondrial matrix side. Residues R293–R297 and N356–Q359 contribute to the glutathione site. Residues F354–Y372 form a helical membrane-spanning segment. The Mitochondrial intermembrane segment spans residues M373 to D387. A helical membrane pass occupies residues L388–Y409. G406 lines the glutathione pocket. Residues R410–A716 are Mitochondrial matrix-facing. Residues I449 to A690 enclose the ABC transporter domain. ATP is bound by residues Y458 and G482 to R493. The segment at E697–A716 is disordered. The segment covering E700–A716 has biased composition (basic and acidic residues).

Belongs to the ABC transporter superfamily. ABCB family. Heavy Metal importer (TC 3.A.1.210) subfamily. As to quaternary structure, homodimer.

The protein localises to the mitochondrion inner membrane. Performs an essential function in the generation of cytoplasmic iron-sulfur proteins by mediating the ATP-dependent export of Fe/S cluster precursors synthesized by egt-3 and other mitochondrial proteins. Hydrolyzes ATP. Binds glutathione and may function by transporting a glutathione-conjugated iron-sulfur compound. The polypeptide is Iron-sulfur clusters transporter atm1, mitochondrial (Neurospora crassa (strain ATCC 24698 / 74-OR23-1A / CBS 708.71 / DSM 1257 / FGSC 987)).